We begin with the raw amino-acid sequence, 212 residues long: Leucyl/phenylalanyl-tRNA--protein transferase (212 aa).

The protein belongs to the L/F-transferase family.

The protein localises to the cytoplasm. It catalyses the reaction N-terminal L-lysyl-[protein] + L-leucyl-tRNA(Leu) = N-terminal L-leucyl-L-lysyl-[protein] + tRNA(Leu) + H(+). It carries out the reaction N-terminal L-arginyl-[protein] + L-leucyl-tRNA(Leu) = N-terminal L-leucyl-L-arginyl-[protein] + tRNA(Leu) + H(+). The catalysed reaction is L-phenylalanyl-tRNA(Phe) + an N-terminal L-alpha-aminoacyl-[protein] = an N-terminal L-phenylalanyl-L-alpha-aminoacyl-[protein] + tRNA(Phe). Functionally, functions in the N-end rule pathway of protein degradation where it conjugates Leu, Phe and, less efficiently, Met from aminoacyl-tRNAs to the N-termini of proteins containing an N-terminal arginine or lysine. This Flavobacterium johnsoniae (strain ATCC 17061 / DSM 2064 / JCM 8514 / BCRC 14874 / CCUG 350202 / NBRC 14942 / NCIMB 11054 / UW101) (Cytophaga johnsonae) protein is Leucyl/phenylalanyl-tRNA--protein transferase.